Consider the following 339-residue polypeptide: Lipoate-protein ligase A (339 aa).

The BPL/LPL catalytic domain occupies 28 to 211 (NPDSHTLFLW…AFREYYRDTD (184 aa)). Residues Arg-70, 75–78 (GAVF), and Lys-129 each bind ATP. Residue Lys-129 coordinates (R)-lipoate.

It belongs to the LplA family. As to quaternary structure, monomer.

The protein localises to the cytoplasm. It catalyses the reaction L-lysyl-[lipoyl-carrier protein] + (R)-lipoate + ATP = N(6)-[(R)-lipoyl]-L-lysyl-[lipoyl-carrier protein] + AMP + diphosphate + H(+). Its pathway is protein modification; protein lipoylation via exogenous pathway; protein N(6)-(lipoyl)lysine from lipoate: step 1/2. It functions in the pathway protein modification; protein lipoylation via exogenous pathway; protein N(6)-(lipoyl)lysine from lipoate: step 2/2. Its function is as follows. Catalyzes both the ATP-dependent activation of exogenously supplied lipoate to lipoyl-AMP and the transfer of the activated lipoyl onto the lipoyl domains of lipoate-dependent enzymes. The protein is Lipoate-protein ligase A of Psychrobacter cryohalolentis (strain ATCC BAA-1226 / DSM 17306 / VKM B-2378 / K5).